A 206-amino-acid polypeptide reads, in one-letter code: LexA repressor (206 aa).

Residues 28–48 (RAEIAKRLGFKSANAAEEHLK) constitute a DNA-binding region (H-T-H motif). Active-site for autocatalytic cleavage activity residues include Ser123 and Lys160.

This sequence belongs to the peptidase S24 family. Homodimer.

The enzyme catalyses Hydrolysis of Ala-|-Gly bond in repressor LexA.. In terms of biological role, represses a number of genes involved in the response to DNA damage (SOS response), including recA and lexA. In the presence of single-stranded DNA, RecA interacts with LexA causing an autocatalytic cleavage which disrupts the DNA-binding part of LexA, leading to derepression of the SOS regulon and eventually DNA repair. The sequence is that of LexA repressor from Shewanella sediminis (strain HAW-EB3).